The primary structure comprises 1325 residues: Lysine-specific demethylase 3A (1325 aa).

Disordered regions lie at residues 249 to 284 (SKRI…QGHV), 300 to 333 (PANK…RRSV), and 372 to 399 (QNGK…TGLK). Positions 274 to 283 (SPEVSQSQGH) are enriched in polar residues. Positions 378-390 (SLISSRSSSLSDS) are enriched in low complexity. The C6-type zinc-finger motif lies at 669 to 694 (CDVCDTTIFNLRWVCSKCGFGVCVDC). Disordered regions lie at residues 772-791 (TLKE…SLQQ) and 798-819 (PQLP…TASV). Residues 888–892 (LRNLL) carry the LXXLL motif motif. The JmjC domain maps to 1062 to 1285 (MPSRFDDLMK…HCFWLTQEFR (224 aa)). His-1124, Asp-1126, and His-1253 together coordinate Fe cation.

Belongs to the JHDM2 histone demethylase family. Requires Fe(2+) as cofactor.

The protein resides in the cytoplasm. It localises to the nucleus. The enzyme catalyses N(6),N(6)-dimethyl-L-lysyl(9)-[histone H3] + 2 2-oxoglutarate + 2 O2 = L-lysyl(9)-[histone H3] + 2 formaldehyde + 2 succinate + 2 CO2. Functionally, histone demethylase that specifically demethylates 'Lys-9' of histone H3, thereby playing a central role in histone code. Preferentially demethylates mono- and dimethylated H3 'Lys-9' residue, with a preference for dimethylated residue, while it has weak or no activity on trimethylated H3 'Lys-9'. Demethylation of Lys residue generates formaldehyde and succinate. This is Lysine-specific demethylase 3A (KDM3A) from Gallus gallus (Chicken).